Here is a 377-residue protein sequence, read N- to C-terminus: Serine protease inhibitor (377 aa).

The first 27 residues, 1-27, serve as a signal peptide directing secretion; sequence MAALQAAVSSQLAISFFSSLIVPGAEK. The N-linked (GlcNAc...) asparagine glycan is linked to asparagine 301. An RCL region spans residues 328–349; sequence GTEAAAATGFGVNFMSMPMQVR. Asparagine 361 carries an N-linked (GlcNAc...) asparagine glycan.

This sequence belongs to the serpin family.

Inhibitor of serine proteases. Inhibits chymotrypsin, cathepsin G and human neutrophil elastase. This chain is Serine protease inhibitor, found in Cyanea capillata (Lion's mane jellyfish).